The following is a 393-amino-acid chain: NAD(P)H-quinone oxidoreductase subunit H, chloroplastic (393 aa).

The protein belongs to the complex I 49 kDa subunit family. As to quaternary structure, NDH is composed of at least 16 different subunits, 5 of which are encoded in the nucleus.

The protein resides in the plastid. It localises to the chloroplast thylakoid membrane. The catalysed reaction is a plastoquinone + NADH + (n+1) H(+)(in) = a plastoquinol + NAD(+) + n H(+)(out). The enzyme catalyses a plastoquinone + NADPH + (n+1) H(+)(in) = a plastoquinol + NADP(+) + n H(+)(out). In terms of biological role, NDH shuttles electrons from NAD(P)H:plastoquinone, via FMN and iron-sulfur (Fe-S) centers, to quinones in the photosynthetic chain and possibly in a chloroplast respiratory chain. The immediate electron acceptor for the enzyme in this species is believed to be plastoquinone. Couples the redox reaction to proton translocation, and thus conserves the redox energy in a proton gradient. The protein is NAD(P)H-quinone oxidoreductase subunit H, chloroplastic of Olimarabidopsis pumila (Dwarf rocket).